We begin with the raw amino-acid sequence, 367 residues long: Aldo-keto reductase AMT2 (367 aa).

Aspartate 76 contacts NADP(+). Tyrosine 81 (proton donor) is an active-site residue. Histidine 173 contacts substrate. NADP(+)-binding positions include 203–204 (SS), glutamine 229, 258–268 (GPLAAGKLARP), and 330–338 (SSVERMDEV). Residues 346 to 367 (LSDEEESRLEDPYKAQPPQGHS) form a disordered region.

This sequence belongs to the aldo/keto reductase family.

It participates in mycotoxin biosynthesis. Its function is as follows. Aldo-keto reductase; part of the gene clusters that mediate the biosynthesis of AM-toxins, host-selective toxins (HSTs) causing Alternaria blotch on apple, a worldwide distributed disease. AM-toxins are cyclic depsipeptides containing the 3 residues 2-hydroxy-isovaleric acid (2-HIV), dehydroalanine, L-alanine which are common for all 3 AM-toxins I to III. The fourth precursor is L-alpha-amino-methoxyphenyl-valeric acid (L-Amv) for AM-toxin I, L-alpha-amino-phenyl-valeric acid (L-Apv) for AM-toxin II, and L-alpha-amino-hydroxyphenyl-valeric acid (L-Ahv) for AM-toxin III. AM-toxins have two target sites for affecting susceptible apple cells; they cause invagination of the plasma membrane and electrolyte loss and chloroplast disorganization. The non-ribosomal peptide synthetase AMT1 contains 4 catalytic modules and is responsible for activation of each residue in AM-toxin. The aldo-keto reductase AMT2 catalyzes the conversion of 2-keto-isovaleric acid (2-KIV) to 2-hydroxy-isovaleric acid (2-HIV), one of the precursor residues incorporated by AMT1 during AM-toxin biosynthesis, by reduction of its ketone to an alcohol. The cytochrome P450 monooxygenase AMT3 and the thioesterase AMT4 are also important for AM-toxin production, but their exact function within the AM-toxin biosynthesis are not known yet. Up to 21 proteins (including AMT1 to AMT4) are predicted to be involved in AM-toxin biosynthesis since their expression ishighly up-regulated in AM-toxin-producing cultures. This is Aldo-keto reductase AMT2 from Alternaria alternata (Alternaria rot fungus).